The following is a 349-amino-acid chain: Spermidine/putrescine import ATP-binding protein PotA (349 aa).

The ABC transporter domain occupies 7–237 (IELKGITKSY…PANSFVAKFI (231 aa)). 39-46 (GPSGCGKT) is a binding site for ATP.

It belongs to the ABC transporter superfamily. Spermidine/putrescine importer (TC 3.A.1.11.1) family. As to quaternary structure, the complex is composed of two ATP-binding proteins (PotA), two transmembrane proteins (PotB and PotC) and a solute-binding protein (PotD).

The protein localises to the cell membrane. It carries out the reaction ATP + H2O + polyamine-[polyamine-binding protein]Side 1 = ADP + phosphate + polyamineSide 2 + [polyamine-binding protein]Side 1.. Its function is as follows. Part of the ABC transporter complex PotABCD involved in spermidine/putrescine import. Responsible for energy coupling to the transport system. The chain is Spermidine/putrescine import ATP-binding protein PotA from Clostridium perfringens (strain SM101 / Type A).